Here is a 308-residue protein sequence, read N- to C-terminus: Protoheme IX farnesyltransferase 2 (308 aa).

9 helical membrane passes run Val-20–Ala-40, Ala-47–Ile-67, Ile-92–Trp-114, Leu-118–Leu-137, Val-144–Ala-164, Leu-174–Phe-194, Leu-218–Gly-238, Thr-240–Leu-260, and Gln-275–Phe-295.

It belongs to the UbiA prenyltransferase family. Protoheme IX farnesyltransferase subfamily.

The protein resides in the cell inner membrane. The catalysed reaction is heme b + (2E,6E)-farnesyl diphosphate + H2O = Fe(II)-heme o + diphosphate. It functions in the pathway porphyrin-containing compound metabolism; heme O biosynthesis; heme O from protoheme: step 1/1. Functionally, converts heme B (protoheme IX) to heme O by substitution of the vinyl group on carbon 2 of heme B porphyrin ring with a hydroxyethyl farnesyl side group. The protein is Protoheme IX farnesyltransferase 2 of Shewanella loihica (strain ATCC BAA-1088 / PV-4).